We begin with the raw amino-acid sequence, 651 residues long: MANLLENFAAHHSMTAGAKKKADHQDTSVSQDSGYSDSLKGFSPDSHKSGNFLETVTEGYENSENIDPTLILSPIKYELSWGADTRESKQLAPLYETPRVGKKEFSLRRRLLISKATSGGNLDFDVSVCSAESCGREKSLRRIPSHEGSLSNSFADSPRDGSYEPIATSTLKTESESGTSCKKWRLSFAQQRSSTLDDSKSDSIPLPEVENISPVQHSLASSTDDSILYEETIFGAPTTPTCNFIVKEEFQTPISNLAANFRFNLCTPDVGHVSDFDISVTEDSAFHSLSLDKSQDSITDHEGSFQELIQKPRETSKAVNNKSRLRKLDRCRRLSTLRERGSQSEVEEEGNEVPVLSSAYKLKVARASVDEENEFSSDESRVHSLLSSDDLTGKPALRVLHEMLLRSTRKRPQQATVQDLLGSSGCFELPEDSLSRLIGRKMGLETFDILAELKNRNLKHILASILDLVNAASICSMCRVSRDWRDVVLQDKSAHQRRKAYIKKLKTEAEQGRQLSFEDSATRLNILSRSALRSVQIQARSAFRTPTSSLTPGDNKSIHSASKHQEYLKVAKTLFTDEALKPCPRCQYPAKYQALKKRGTCSRKDCGFDFCSLCLCTFHGSKECGTGSAKRIPKKEALPGSAQSKRNLKRL.

Disordered regions lie at residues 14–42 (MTAG…LKGF) and 140–171 (LRRI…TSTL). The span at 27 to 36 (TSVSQDSGYS) shows a compositional bias: polar residues. Serine 33 is subject to Phosphoserine; by PLK1. The residue at position 195 (threonine 195) is a Phosphothreonine; by CaMK2. One can recognise an F-box domain in the interval 424 to 499 (SGCFELPEDS…QDKSAHQRRK (76 aa)). The segment at 579 to 627 (ALKPCPRCQYPAKYQALKKRGTCSRKDCGFDFCSLCLCTFHGSKECGTG) adopts a ZBR-type zinc-finger fold. Positions 583, 586, 601, 606, 611, 614, 619, and 624 each coordinate Zn(2+).

In terms of assembly, part of a SCF (SKP1-cullin-F-box) protein ligase complex. Interaction with SKP1 does not occur. In terms of processing, phosphorylated on Thr-195 by CaMK2 in response to calcium during egg activation, which promotes subsequent phosphorylation by PLK1, ubiquitination and protesomal degradation. Ubiquitinated by FBXW1 during egg activation, which promotes proteasomal degradation.

It participates in protein modification; protein ubiquitination. Functionally, required to prevent anaphase onset in cytostatic factor-arrested oocytes. Inhibits the anaphase-promoting complex/cyclosome (APC/C) ubiquitin ligase and prevents cyclin degradation. Probably recognizes and binds to some phosphorylated proteins and promotes their ubiquitination and degradation. The sequence is that of F-box only protein 43 (fbxo43) from Xenopus laevis (African clawed frog).